The following is a 379-amino-acid chain: Chaperone protein DnaJ (379 aa).

The J domain maps to 5-69 (EFYDRLGVSK…QKRAAYDQYG (65 aa)). The CR-type zinc-finger motif lies at 135–217 (GAEKEVSYNR…CHGTGHEKKT (83 aa)). Positions 148, 151, 165, 168, 191, 194, 205, and 208 each coordinate Zn(2+). 4 CXXCXGXG motif repeats span residues 148–155 (CHTCSGSG), 165–172 (CQKCHGSG), 191–198 (CDVCQGSG), and 205–212 (CPTCHGTG).

This sequence belongs to the DnaJ family. As to quaternary structure, homodimer. It depends on Zn(2+) as a cofactor.

The protein resides in the cytoplasm. Participates actively in the response to hyperosmotic and heat shock by preventing the aggregation of stress-denatured proteins and by disaggregating proteins, also in an autonomous, DnaK-independent fashion. Unfolded proteins bind initially to DnaJ; upon interaction with the DnaJ-bound protein, DnaK hydrolyzes its bound ATP, resulting in the formation of a stable complex. GrpE releases ADP from DnaK; ATP binding to DnaK triggers the release of the substrate protein, thus completing the reaction cycle. Several rounds of ATP-dependent interactions between DnaJ, DnaK and GrpE are required for fully efficient folding. Also involved, together with DnaK and GrpE, in the DNA replication of plasmids through activation of initiation proteins. The chain is Chaperone protein DnaJ from Streptococcus agalactiae serotype V (strain ATCC BAA-611 / 2603 V/R).